A 106-amino-acid polypeptide reads, in one-letter code: ATP-dependent Clp protease adapter protein ClpS (106 aa).

Residues 1–22 form a disordered region; it reads MTDEPNQDDPQGPEVEAAKPSL.

It belongs to the ClpS family. Binds to the N-terminal domain of the chaperone ClpA.

In terms of biological role, involved in the modulation of the specificity of the ClpAP-mediated ATP-dependent protein degradation. The sequence is that of ATP-dependent Clp protease adapter protein ClpS from Halorhodospira halophila (strain DSM 244 / SL1) (Ectothiorhodospira halophila (strain DSM 244 / SL1)).